We begin with the raw amino-acid sequence, 437 residues long: MRNTELVQWFRQSTPYVNMHREKTFVIMLDGNAIAHPNFINITNDISLLHSLGIKLVIVFGARCQIDELLAKNQMSSTYHKHIRITDSKTLEVVKQAVGGLHYDIFSRLSLRLPNSPVLNVVSSNAVLAQPLGVIDGVDYGLSGKIRRINIEGIQQQLAQDAIVVIGPIAPSVTGEMFNLPFEEIATQIAIKLKADKLIGFCDQQGILDSEGNVLSDLHPREAKRYLTQFIESGQYHHSAARFLQASIEVCHAGIKRSHLLSYKEDGSLLQELFSRDGIGTQLSEESSENIRLATSFDIPGLLNLIRPLEEQGILVKRSREQLEMEISNYTIIERDGIVIACAALNHYPEEKMAEMACVAVHPDYRDSSRGDVLLEAIKRRAYKLQVEKLFVLTTRTTQWFQERGFVLSTTDDLPKEKREHYNYQRMSKILILELSQ.

The 141-residue stretch at 289–429 folds into the N-acetyltransferase domain; it reads ENIRLATSFD…EHYNYQRMSK (141 aa).

The protein belongs to the acetyltransferase family. ArgA subfamily.

The protein localises to the cytoplasm. It carries out the reaction L-glutamate + acetyl-CoA = N-acetyl-L-glutamate + CoA + H(+). It participates in amino-acid biosynthesis; L-arginine biosynthesis; N(2)-acetyl-L-ornithine from L-glutamate: step 1/4. In Actinobacillus pleuropneumoniae serotype 3 (strain JL03), this protein is Amino-acid acetyltransferase.